The sequence spans 212 residues: Pyridoxine/pyridoxamine 5'-phosphate oxidase (212 aa).

Residues 8–11 and Lys-66 each bind substrate; that span reads RREY. Residues 61–66, 76–77, Arg-82, Lys-83, and Gln-105 each bind FMN; these read RIVLLK and FT. Substrate contacts are provided by Tyr-123, Arg-127, and Ser-131. FMN is bound by residues 140 to 141 and Trp-185; that span reads QS. Substrate is bound at residue 191 to 193; the sequence is RLH. Arg-195 contributes to the FMN binding site.

Belongs to the pyridoxamine 5'-phosphate oxidase family. In terms of assembly, homodimer. It depends on FMN as a cofactor.

It carries out the reaction pyridoxamine 5'-phosphate + O2 + H2O = pyridoxal 5'-phosphate + H2O2 + NH4(+). It catalyses the reaction pyridoxine 5'-phosphate + O2 = pyridoxal 5'-phosphate + H2O2. It participates in cofactor metabolism; pyridoxal 5'-phosphate salvage; pyridoxal 5'-phosphate from pyridoxamine 5'-phosphate: step 1/1. Its pathway is cofactor metabolism; pyridoxal 5'-phosphate salvage; pyridoxal 5'-phosphate from pyridoxine 5'-phosphate: step 1/1. Catalyzes the oxidation of either pyridoxine 5'-phosphate (PNP) or pyridoxamine 5'-phosphate (PMP) into pyridoxal 5'-phosphate (PLP). In Shewanella sp. (strain ANA-3), this protein is Pyridoxine/pyridoxamine 5'-phosphate oxidase.